A 219-amino-acid polypeptide reads, in one-letter code: Proteasome subunit beta type-9 (219 aa).

Residues 1–20 (MLRAGAPTAGSFRTEEVHTG) constitute a propeptide, removed in mature form. Thr-21 acts as the Nucleophile in catalysis. N6-acetyllysine is present on residues Lys-53 and Lys-109.

This sequence belongs to the peptidase T1B family. The 26S proteasome consists of a 20S proteasome core and two 19S regulatory subunits. The 20S proteasome core is composed of 28 subunits that are arranged in four stacked rings, resulting in a barrel-shaped structure. The two end rings are each formed by seven alpha subunits, and the two central rings are each formed by seven beta subunits. The catalytic chamber with the active sites is on the inside of the barrel. Component of the immunoproteasome, where it displaces the equivalent housekeeping subunit PSMB6. Component of the spermatoproteasome, a form of the proteasome specifically found in testis. Autocleaved. The resulting N-terminal Thr residue of the mature subunit is responsible for the nucleophile proteolytic activity.

The protein localises to the cytoplasm. It localises to the nucleus. The catalysed reaction is Cleavage of peptide bonds with very broad specificity.. In terms of biological role, the proteasome is a multicatalytic proteinase complex which is characterized by its ability to cleave peptides with Arg, Phe, Tyr, Leu, and Glu adjacent to the leaving group at neutral or slightly basic pH. The proteasome has an ATP-dependent proteolytic activity. This subunit is involved in antigen processing to generate class I binding peptides. This Mus spicilegus (Steppe mouse) protein is Proteasome subunit beta type-9 (Psmb9).